The primary structure comprises 553 residues: MPHFNPVPVSNKKFVFDDFILNMDGSLLRSEKKVNIPPKEYAVLVILLEAAGEIVSKNTLLDQVWGDAEVNEESLTRCIYALRRILSEDKEHRYIETLYGQGYRFNRPVVVVSPPAPQPTTHTLAILPFQMQDQVQSESLHYSIVKGLSQYAPFGLSVLPVTITKNCRSVKDILELMDQLRPDYYISGQMIPDGNDNIVQIEIVRVKGYHLLHQESIKLIEHQPASLLQNKIANLLLRCIPGLRWDTKQISELNSIDSTMVYLRGKHELNQYTPYSLQQALKLLTQCVNMSPNSIAPYCALAECYLSMTQMGIFDKQNAMIKAKEHAIKATELDHNNPQALGLLGLINTIHSEYIVGSLLFKQANLLSPISADIKYYYGWNLFMAGQLEEALQTINECLKLDPTRAAAGITKLWITYYHTGIDDAIRLGDELRSQHLQDNPILLSMQVMFLSLKGKHELARKLTKEISTQEITGLIAVNLLYAEYCQNSERALPTIREFLESEQRIDNNPGLLPLVLVAHGEAIAEKMWNKFKNEDNIWFKRWKQDPRLIKLR.

A DNA-binding region (ompR/PhoB-type) is located at residues Asn-11 to Arg-107. A 4-aspartylphosphate modification is found at Asp-62. The TPR repeat unit spans residues Ala-372–Arg-405.

In terms of biological role, the main transcriptional regulator of the Salmonella pathogenicity island 1 (SPI1) gene expression. Activates the expression of invasion genes by a direct action at their promoters and also indirectly by increasing the level of invF. Also binds upstream of prgH and directly activates the expression of prgHIJK operon. The sequence is that of Transcriptional regulator HilA (hilA) from Salmonella paratyphi A (strain ATCC 9150 / SARB42).